The primary structure comprises 219 residues: Probable GTP-binding protein EngB (219 aa).

Positions 31-205 constitute an EngB-type G domain; it reads VGVEIAFAGR…LSILNEWCHP (175 aa). Residues 39–46, 66–70, 84–87, 151–154, and 184–186 contribute to the GTP site; these read GRSNAGKS, GRTQL, DLPG, TKSD, and FSA. 2 residues coordinate Mg(2+): Ser-46 and Thr-68.

It belongs to the TRAFAC class TrmE-Era-EngA-EngB-Septin-like GTPase superfamily. EngB GTPase family. Requires Mg(2+) as cofactor.

In terms of biological role, necessary for normal cell division and for the maintenance of normal septation. The sequence is that of Probable GTP-binding protein EngB from Shewanella putrefaciens (strain CN-32 / ATCC BAA-453).